Reading from the N-terminus, the 1268-residue chain is ATP-dependent helicase/nuclease subunit A (1268 aa).

The UvrD-like helicase ATP-binding domain occupies 3–476 (TKWTEEQELA…IMLYKNFRSR (474 aa)). Residue 24-31 (AAAGSGKT) participates in ATP binding. The UvrD-like helicase C-terminal domain occupies 528 to 824 (IENLKVAGDI…RIMSIHKSKG (297 aa)).

This sequence belongs to the helicase family. AddA subfamily. In terms of assembly, heterodimer of AddA and AddB/RexB. Requires Mg(2+) as cofactor.

It catalyses the reaction Couples ATP hydrolysis with the unwinding of duplex DNA by translocating in the 3'-5' direction.. It carries out the reaction ATP + H2O = ADP + phosphate + H(+). Its function is as follows. The heterodimer acts as both an ATP-dependent DNA helicase and an ATP-dependent, dual-direction single-stranded exonuclease. Recognizes the chi site generating a DNA molecule suitable for the initiation of homologous recombination. The AddA nuclease domain is required for chi fragment generation; this subunit has the helicase and 3' -&gt; 5' nuclease activities. The chain is ATP-dependent helicase/nuclease subunit A from Clostridium perfringens (strain 13 / Type A).